Here is a 413-residue protein sequence, read N- to C-terminus: Precorrin-6Y C(5,15)-methyltransferase [decarboxylating] (413 aa).

It belongs to the precorrin methyltransferase family.

The enzyme catalyses precorrin-6B + 2 S-adenosyl-L-methionine = precorrin-8X + 2 S-adenosyl-L-homocysteine + CO2 + 3 H(+). The protein operates within cofactor biosynthesis; adenosylcobalamin biosynthesis; cob(II)yrinate a,c-diamide from precorrin-2 (aerobic route): step 7/10. Its function is as follows. Catalyzes the methylation of both C-5 and C-15 in precorrin-6Y to form precorrin-8X. The polypeptide is Precorrin-6Y C(5,15)-methyltransferase [decarboxylating] (cobL) (Sinorhizobium sp).